Consider the following 122-residue polypeptide: Large ribosomal subunit protein uL14 (122 aa).

The protein belongs to the universal ribosomal protein uL14 family. Part of the 50S ribosomal subunit. Forms a cluster with proteins L3 and L19. In the 70S ribosome, L14 and L19 interact and together make contacts with the 16S rRNA in bridges B5 and B8.

In terms of biological role, binds to 23S rRNA. Forms part of two intersubunit bridges in the 70S ribosome. This chain is Large ribosomal subunit protein uL14, found in Chlorobium limicola (strain DSM 245 / NBRC 103803 / 6330).